The primary structure comprises 792 residues: Probable exo-1,4-beta-xylosidase xlnD (792 aa).

A signal peptide spans 1–20; that stretch reads MSVAKSIAAVLVALLPGALA. N-linked (GlcNAc...) asparagine glycosylation is found at Asn23, Asn87, Asn118, Asn142, and Asn246. Asp310 is an active-site residue. N-linked (GlcNAc...) asparagine glycans are attached at residues Asn326, Asn385, Asn404, Asn440, Asn477, Asn518, Asn679, and Asn701.

This sequence belongs to the glycosyl hydrolase 3 family.

It localises to the secreted. The catalysed reaction is Hydrolysis of (1-&gt;4)-beta-D-xylans, to remove successive D-xylose residues from the non-reducing termini.. It participates in glycan degradation; xylan degradation. In terms of biological role, xylan 1,4-beta-xylosidase involved in the hydrolysis of xylan, a major structural heterogeneous polysaccharide found in plant biomass representing the second most abundant polysaccharide in the biosphere, after cellulose. This chain is Probable exo-1,4-beta-xylosidase xlnD (xlnD), found in Aspergillus fumigatus (strain ATCC MYA-4609 / CBS 101355 / FGSC A1100 / Af293) (Neosartorya fumigata).